A 264-amino-acid polypeptide reads, in one-letter code: Tryptophan synthase alpha chain (264 aa).

Catalysis depends on proton acceptor residues Glu49 and Asp60.

It belongs to the TrpA family. Tetramer of two alpha and two beta chains.

It carries out the reaction (1S,2R)-1-C-(indol-3-yl)glycerol 3-phosphate + L-serine = D-glyceraldehyde 3-phosphate + L-tryptophan + H2O. The protein operates within amino-acid biosynthesis; L-tryptophan biosynthesis; L-tryptophan from chorismate: step 5/5. Functionally, the alpha subunit is responsible for the aldol cleavage of indoleglycerol phosphate to indole and glyceraldehyde 3-phosphate. The protein is Tryptophan synthase alpha chain of Synechocystis sp. (strain ATCC 27184 / PCC 6803 / Kazusa).